A 333-amino-acid chain; its full sequence is Transaldolase (333 aa).

Catalysis depends on K136, which acts as the Schiff-base intermediate with substrate.

This sequence belongs to the transaldolase family. Type 1 subfamily. In terms of assembly, homodimer.

Its subcellular location is the cytoplasm. The enzyme catalyses D-sedoheptulose 7-phosphate + D-glyceraldehyde 3-phosphate = D-erythrose 4-phosphate + beta-D-fructose 6-phosphate. Its pathway is carbohydrate degradation; pentose phosphate pathway; D-glyceraldehyde 3-phosphate and beta-D-fructose 6-phosphate from D-ribose 5-phosphate and D-xylulose 5-phosphate (non-oxidative stage): step 2/3. In terms of biological role, transaldolase is important for the balance of metabolites in the pentose-phosphate pathway. In Acidobacterium capsulatum (strain ATCC 51196 / DSM 11244 / BCRC 80197 / JCM 7670 / NBRC 15755 / NCIMB 13165 / 161), this protein is Transaldolase.